A 364-amino-acid chain; its full sequence is Aminomethyltransferase (364 aa).

It belongs to the GcvT family. The glycine cleavage system is composed of four proteins: P, T, L and H.

The enzyme catalyses N(6)-[(R)-S(8)-aminomethyldihydrolipoyl]-L-lysyl-[protein] + (6S)-5,6,7,8-tetrahydrofolate = N(6)-[(R)-dihydrolipoyl]-L-lysyl-[protein] + (6R)-5,10-methylene-5,6,7,8-tetrahydrofolate + NH4(+). In terms of biological role, the glycine cleavage system catalyzes the degradation of glycine. This chain is Aminomethyltransferase, found in Salmonella paratyphi C (strain RKS4594).